A 360-amino-acid polypeptide reads, in one-letter code: Heme A synthase (360 aa).

9 helical membrane-spanning segments follow: residues Trp-29–Leu-49, Phe-111–Gly-131, Leu-139–Val-159, Leu-175–Gly-195, Leu-210–Ala-230, Pro-242–Ile-262, Val-269–Leu-289, Ala-309–Val-329, and Pro-330–Val-350. His-276 provides a ligand contact to heme. Residue His-337 coordinates heme.

The protein belongs to the COX15/CtaA family. Type 2 subfamily. As to quaternary structure, interacts with CtaB. Heme b is required as a cofactor.

The protein localises to the cell membrane. The catalysed reaction is Fe(II)-heme o + 2 A + H2O = Fe(II)-heme a + 2 AH2. Its pathway is porphyrin-containing compound metabolism; heme A biosynthesis; heme A from heme O: step 1/1. Its function is as follows. Catalyzes the conversion of heme O to heme A by two successive hydroxylations of the methyl group at C8. The first hydroxylation forms heme I, the second hydroxylation results in an unstable dihydroxymethyl group, which spontaneously dehydrates, resulting in the formyl group of heme A. This is Heme A synthase from Methylobacterium nodulans (strain LMG 21967 / CNCM I-2342 / ORS 2060).